The sequence spans 1574 residues: RNA2 polyprotein (1574 aa).

The stretch at 361–422 (ERVKAFSSHH…ERLRAAKEDR (62 aa)) forms a coiled coil. 2 disordered regions span residues 557 to 579 (PPPIITAPVGQRVGGNPPTETPG) and 863 to 916 (RSAT…RGYT).

Specific enzymatic cleavages by RNA1 encoded picornain 3C-like protease in vivo yield mature proteins.

The protein localises to the host cell junction. Its subcellular location is the host plasmodesma. It localises to the virion. Functionally, transports viral genome to neighboring plant cells directly through plasmosdesmata, without any budding. The movement protein allows efficient cell to cell propagation, by bypassing the host cell wall barrier. Acts by forming a tubular structure at the host plasmodesmata, enlarging it enough to allow free passage of virion capsids. Capsid proteins form a capsid enclosing the viral positive strand RNA genome. Together they form an icosahedral capsid pseudo T=3 with a diameter of approximately 30 nm (Potential). The protein is RNA2 polyprotein of Citrus unshiu (Satsuma mandarin).